A 122-amino-acid polypeptide reads, in one-letter code: Large ribosomal subunit protein uL14 (122 aa).

The protein belongs to the universal ribosomal protein uL14 family. As to quaternary structure, part of the 50S ribosomal subunit. Forms a cluster with proteins L3 and L19. In the 70S ribosome, L14 and L19 interact and together make contacts with the 16S rRNA in bridges B5 and B8.

In terms of biological role, binds to 23S rRNA. Forms part of two intersubunit bridges in the 70S ribosome. This chain is Large ribosomal subunit protein uL14, found in Kocuria rhizophila (strain ATCC 9341 / DSM 348 / NBRC 103217 / DC2201).